A 461-amino-acid polypeptide reads, in one-letter code: Peptidyl-prolyl cis-trans isomerase-like 4 (461 aa).

Residues 1 to 171 (MSVLLETSLG…KDIRIRHTVI (171 aa)) form the PPIase cyclophilin-type domain. In terms of domain architecture, RRM spans 248 to 326 (NVLFVCKLNP…HRIHVDFSQS (79 aa)). A disordered region spans residues 372–461 (NYNMVFDKND…DDRYRDRRRR (90 aa)). 2 stretches are compositionally biased toward basic and acidic residues: residues 378–392 (DKND…ERSY) and 400–461 (NYRD…RRRR).

The protein belongs to the cyclophilin-type PPIase family. PPIL4 subfamily.

It is found in the nucleus. It carries out the reaction [protein]-peptidylproline (omega=180) = [protein]-peptidylproline (omega=0). PPIases accelerate the folding of proteins. It catalyzes the cis-trans isomerization of proline imidic peptide bonds in oligopeptides. In Emericella nidulans (strain FGSC A4 / ATCC 38163 / CBS 112.46 / NRRL 194 / M139) (Aspergillus nidulans), this protein is Peptidyl-prolyl cis-trans isomerase-like 4 (cyp6).